The chain runs to 201 residues: Phospholipase A2 inhibitor PIP (201 aa).

An N-terminal signal peptide occupies residues 1–19 (MKSLQTICLLFIFIARGTS). Intrachain disulfides connect C22–C46, C25–C32, C39–C67, C73–C94, C95–C100, C118–C143, C136–C165, and C169–C191. N157 carries an N-linked (GlcNAc...) asparagine glycan.

As to quaternary structure, homohexamer. In terms of processing, glycosylated. In terms of tissue distribution, expressed by the liver.

The protein localises to the secreted. Inhibits the enzymatic activity of phospholipase A2 (PA2). Binds to the major PLA2 toxin of D.russelli siamensis (Daboiatoxin, AC Q7T2R1, and AC Q7T3T5) at 1-2-fold molar excess of inhibitor to toxin. It exhibits broad spectra in neutralizing the toxicity of various snake venoms and toxins and inhibits the formation of edema in mice. May bind to PLA2 through its proline-rich hydrophobic core region. The polypeptide is Phospholipase A2 inhibitor PIP (Malayopython reticulatus (Reticulate python)).